Consider the following 603-residue polypeptide: Phosphomethylpyrimidine synthase (603 aa).

Substrate contacts are provided by residues asparagine 224, methionine 253, tyrosine 282, histidine 318, 338–340 (SRG), 379–382 (DGLR), and glutamate 418. Histidine 422 lines the Zn(2+) pocket. Tyrosine 445 provides a ligand contact to substrate. Position 486 (histidine 486) interacts with Zn(2+). The [4Fe-4S] cluster site is built by cysteine 566, cysteine 569, and cysteine 574.

It belongs to the ThiC family. As to quaternary structure, homodimer. [4Fe-4S] cluster is required as a cofactor.

It catalyses the reaction 5-amino-1-(5-phospho-beta-D-ribosyl)imidazole + S-adenosyl-L-methionine = 4-amino-2-methyl-5-(phosphooxymethyl)pyrimidine + CO + 5'-deoxyadenosine + formate + L-methionine + 3 H(+). The protein operates within cofactor biosynthesis; thiamine diphosphate biosynthesis. In terms of biological role, catalyzes the synthesis of the hydroxymethylpyrimidine phosphate (HMP-P) moiety of thiamine from aminoimidazole ribotide (AIR) in a radical S-adenosyl-L-methionine (SAM)-dependent reaction. In Xylella fastidiosa (strain Temecula1 / ATCC 700964), this protein is Phosphomethylpyrimidine synthase.